A 1677-amino-acid chain; its full sequence is ELMO domain-containing protein E (1677 aa).

14 disordered regions span residues 112–139 (TTTS…SSPS), 168–194 (NSKD…SNIK), 264–372 (QLHG…NTTE), 592–625 (DDDN…RSNS), 775–801 (PNSN…STNN), 888–947 (INKN…NQDI), 982–1002 (KIRS…SQPE), 1047–1075 (STNN…ETRS), 1122–1141 (KQKS…GNVS), 1197–1248 (NNNI…DNHA), 1261–1404 (DDDD…RKKR), 1434–1454 (SPGS…PQPE), 1467–1593 (KNPE…GDVS), and 1654–1677 (ESQR…SSSK). Low complexity-rich tracts occupy residues 115-139 (SSSS…SSPS) and 172-194 (TNNS…SNIK). A compositionally biased stretch (gly residues) spans 269-278 (SIGGGGGGSG). Composition is skewed to low complexity over residues 307–334 (SQSN…KPNN), 341–352 (TTTTTTTTTTTS), and 597–616 (NNNN…NNYN). The region spanning 492 to 710 (SHQILLSDLW…HTREIIEKVC (219 aa)) is the ELMO domain. The segment covering 891 to 903 (NGGGGGGGGGGGV) has biased composition (gly residues). A compositionally biased stretch (acidic residues) spans 922–933 (IDDSDDENDNDE). 2 stretches are compositionally biased toward low complexity: residues 934-946 (VNNN…INQD) and 985-996 (SSSSTPDTSSPP). The stretch at 1186–1212 (LLDDVLDLNQTNNNIDNENDDINEAII) forms a coiled coil. Residues 1228–1238 (EEEEEEEEEEE) are compositionally biased toward acidic residues. Over residues 1285–1305 (NNTTTTTTTTTTTTTTTTNTT) the composition is skewed to low complexity. A compositionally biased stretch (polar residues) spans 1306 to 1334 (GQKRISILSTDTNRPGSSNYGESSLSNGS). The span at 1387-1397 (DDEDDEDDDDK) shows a compositional bias: acidic residues. Residues 1445–1454 (PHLSVSPQPE) show a composition bias toward polar residues. 3 stretches are compositionally biased toward low complexity: residues 1475–1488 (LSSS…PLLS), 1503–1574 (SNLI…PSSS), and 1663–1677 (ASSS…SSSK).

This is ELMO domain-containing protein E (elmoE) from Dictyostelium discoideum (Social amoeba).